The primary structure comprises 698 residues: Polyribonucleotide nucleotidyltransferase (698 aa).

Positions 490 and 496 each coordinate Mg(2+). Residues 557–616 (PKVVTMTIKPDKIRDVIGPGGKKINEIIDETGVKLDIEQDGTIFIGAVDQAMINRAREII) form the KH domain. In terms of domain architecture, S1 motif spans 626 to 694 (GQTYQATVKR…KQGRVNASHR (69 aa)).

This sequence belongs to the polyribonucleotide nucleotidyltransferase family. Mg(2+) serves as cofactor.

The protein localises to the cytoplasm. The catalysed reaction is RNA(n+1) + phosphate = RNA(n) + a ribonucleoside 5'-diphosphate. In terms of biological role, involved in mRNA degradation. Catalyzes the phosphorolysis of single-stranded polyribonucleotides processively in the 3'- to 5'-direction. The sequence is that of Polyribonucleotide nucleotidyltransferase from Staphylococcus aureus (strain MSSA476).